A 259-amino-acid chain; its full sequence is Polycomb group RING finger protein 1 (259 aa).

A2 is subject to N-acetylalanine. S3 is modified (phosphoserine). K24 is covalently cross-linked (Glycyl lysine isopeptide (Lys-Gly) (interchain with G-Cter in SUMO2)). The RING-type zinc-finger motif lies at 47 to 86; sequence CCLCAGYFVDATTITECLHTFCKSCIVKYLQTSKYCPMCN. Residues 86 to 247 are necessary for repressor activity; that stretch reads NIKIHETQPL…LSRWFGKPSP (162 aa). Residue K88 forms a Glycyl lysine isopeptide (Lys-Gly) (interchain with G-Cter in SUMO2) linkage. The segment at 150–255 is required for the interaction with the KDM2B-SKP1 heterodimeric complex; that stretch reads LPFSSFDHSK…SPLLLQYSVK (106 aa). Residues 167–255 form an RING-finger and WD40-associated ubiquitin-like domain (RAWUL); sufficient for interaction with BCOR and BCORL1 region; the sequence is EQLSLCLERL…SPLLLQYSVK (89 aa).

Interacts with BCORL1, forming heterodimers. The PCGF1-BCORL1 heterodimeric complex interacts with the KDM2B-SKP1 heterodimeric complex to form a homotetrameric polycomb repression complex 1 (PRC1.1). Component of the repressive BCOR complex containing a Polycomb group subcomplex at least composed of RYBP, RING1 and RNF2/RING2. Specifically interacts with BCOR, RING1 and RNF2/RING2. Component of a PRC1-like complex. Interacts with CBX6, CBX7 and CBX8. Interacts with DPPA4, NANOG, POU5F1 and RYBP.

Its subcellular location is the nucleus. Functionally, component of the Polycomb group (PcG) multiprotein BCOR complex, a complex required to maintain the transcriptionally repressive state of some genes, such as BCL6 and the cyclin-dependent kinase inhibitor, CDKN1A. Transcriptional repressor that may be targeted to the DNA by BCL6; this transcription repressor activity may be related to PKC signaling pathway. Represses CDKN1A expression by binding to its promoter, and this repression is dependent on the retinoic acid response element (RARE element). Promotes cell cycle progression and enhances cell proliferation as well. May have a positive role in tumor cell growth by down-regulating CDKN1A. Component of a Polycomb group (PcG) multiprotein PRC1-like complex, a complex class required to maintain the transcriptionally repressive state of many genes, including Hox genes, throughout development. PcG PRC1 complex acts via chromatin remodeling and modification of histones; it mediates monoubiquitination of histone H2A 'Lys-119', rendering chromatin heritably changed in its expressibility. Within the PRC1-like complex, regulates RNF2 ubiquitin ligase activity. Regulates the expression of DPPA4 and NANOG in the NT2 embryonic carcinoma cells. The sequence is that of Polycomb group RING finger protein 1 (Pcgf1) from Mus musculus (Mouse).